The sequence spans 137 residues: Venom allergen 4 (137 aa).

The signal sequence occupies residues 1 to 19 (MKTFVLVSCLLVFTQIIYA).

The protein belongs to the ant venom allergen 2/4 family. In terms of assembly, monomer. As to expression, expressed by the venom gland.

It is found in the secreted. This Solenopsis geminata (Tropical fire ant) protein is Venom allergen 4.